Consider the following 378-residue polypeptide: Ribosomal RNA large subunit methyltransferase G (378 aa).

The protein belongs to the methyltransferase superfamily. RlmG family.

It is found in the cytoplasm. The catalysed reaction is guanosine(1835) in 23S rRNA + S-adenosyl-L-methionine = N(2)-methylguanosine(1835) in 23S rRNA + S-adenosyl-L-homocysteine + H(+). Functionally, specifically methylates the guanine in position 1835 (m2G1835) of 23S rRNA. This chain is Ribosomal RNA large subunit methyltransferase G, found in Escherichia coli (strain ATCC 8739 / DSM 1576 / NBRC 3972 / NCIMB 8545 / WDCM 00012 / Crooks).